The primary structure comprises 143 residues: Peptide methionine sulfoxide reductase MsrB (143 aa).

The MsrB domain occupies 16–139; the sequence is DAELRRRLTP…NSAALNFESR (124 aa). Zn(2+) is bound by residues C55, C58, C104, and C107. C128 (nucleophile) is an active-site residue.

It belongs to the MsrB Met sulfoxide reductase family. Zn(2+) is required as a cofactor.

The catalysed reaction is L-methionyl-[protein] + [thioredoxin]-disulfide + H2O = L-methionyl-(R)-S-oxide-[protein] + [thioredoxin]-dithiol. This chain is Peptide methionine sulfoxide reductase MsrB, found in Burkholderia cenocepacia (strain ATCC BAA-245 / DSM 16553 / LMG 16656 / NCTC 13227 / J2315 / CF5610) (Burkholderia cepacia (strain J2315)).